The sequence spans 201 residues: MKVHMLVGVLVMVGFTVGKVPVPDIRTCHFCLVEDPSVGCISGSEKCTISSSSLCMVITIYYDVKVRFIVRGCGQYISYRCQEKRNTYFAEYWYQAQCCQYDYCNSWSSPQLQSSLPEPHDRPLALPLSDSQIQWFYQALNLSLPLPNFHAGTEPDGLDPMVTLSLNLGLSFAELRRMYLFLNSSGLLVLPQAGLLTPHPS.

An N-terminal signal peptide occupies residues Met1–Gly18. A UPAR/Ly6 domain is found at Arg26 to Glu118. Intrachain disulfides connect Cys28–Cys55, Cys31–Cys40, Cys47–Cys73, Cys81–Cys98, and Cys99–Cys104. Asn141 and Asn183 each carry an N-linked (GlcNAc...) asparagine glycan.

Forms oligomer. In terms of processing, N-glycosylated.

It localises to the secreted. The chain is Lymphocyte antigen 6 complex locus protein G5b (LY6G5B) from Homo sapiens (Human).